Reading from the N-terminus, the 91-residue chain is Probable Fe(2+)-trafficking protein (91 aa).

It belongs to the Fe(2+)-trafficking protein family.

Could be a mediator in iron transactions between iron acquisition and iron-requiring processes, such as synthesis and/or repair of Fe-S clusters in biosynthetic enzymes. The polypeptide is Probable Fe(2+)-trafficking protein (Tolumonas auensis (strain DSM 9187 / NBRC 110442 / TA 4)).